The chain runs to 396 residues: Endo-1,4-beta-xylanase A (396 aa).

The signal sequence occupies residues 1–28 (MITLFRKPFVAGLAISLLVGGGIGNVAA). A GH10 domain is found at 51-396 (AWQVASLSER…VKPAYWRIID (346 aa)). Glutamate 195 (proton donor) is an active-site residue. The active-site Nucleophile is the glutamate 301.

Belongs to the glycosyl hydrolase 10 (cellulase F) family.

It is found in the secreted. The enzyme catalyses Endohydrolysis of (1-&gt;4)-beta-D-xylosidic linkages in xylans.. Its pathway is glycan degradation; xylan degradation. In Halalkalibacterium halodurans (strain ATCC BAA-125 / DSM 18197 / FERM 7344 / JCM 9153 / C-125) (Bacillus halodurans), this protein is Endo-1,4-beta-xylanase A (xynA).